A 167-amino-acid chain; its full sequence is Cell division protein SepF (167 aa).

Residues 25-64 (EEDVAPVNNSTFQEKKHKKRSAVQRKQKNSDQEGDSVVPL) form a disordered region. Basic residues predominate over residues 39–51 (KKHKKRSAVQRKQ).

It belongs to the SepF family. In terms of assembly, homodimer. Interacts with FtsZ.

It is found in the cytoplasm. Cell division protein that is part of the divisome complex and is recruited early to the Z-ring. Probably stimulates Z-ring formation, perhaps through the cross-linking of FtsZ protofilaments. Its function overlaps with FtsA. In Natranaerobius thermophilus (strain ATCC BAA-1301 / DSM 18059 / JW/NM-WN-LF), this protein is Cell division protein SepF.